We begin with the raw amino-acid sequence, 300 residues long: 4-hydroxy-tetrahydrodipicolinate synthase (300 aa).

Thr45 is a pyruvate binding site. Catalysis depends on Tyr140, which acts as the Proton donor/acceptor. Residue Lys169 is the Schiff-base intermediate with substrate of the active site. Ile210 lines the pyruvate pocket.

This sequence belongs to the DapA family. Homotetramer; dimer of dimers.

It localises to the cytoplasm. It carries out the reaction L-aspartate 4-semialdehyde + pyruvate = (2S,4S)-4-hydroxy-2,3,4,5-tetrahydrodipicolinate + H2O + H(+). It participates in amino-acid biosynthesis; L-lysine biosynthesis via DAP pathway; (S)-tetrahydrodipicolinate from L-aspartate: step 3/4. Its function is as follows. Catalyzes the condensation of (S)-aspartate-beta-semialdehyde [(S)-ASA] and pyruvate to 4-hydroxy-tetrahydrodipicolinate (HTPA). This chain is 4-hydroxy-tetrahydrodipicolinate synthase, found in Helicobacter pylori (strain J99 / ATCC 700824) (Campylobacter pylori J99).